The following is a 232-amino-acid chain: Ras association domain-containing protein 3 (232 aa).

Serine 2 carries the post-translational modification N-acetylserine. Residues 25–46 (RAPPGKSRSGQPDVEKEKETHN) are disordered. Basic and acidic residues predominate over residues 37-46 (DVEKEKETHN). Residues 78 to 180 (YTGFIKVQME…TLSFVLREHE (103 aa)) enclose the Ras-associating domain. Residues 181–228 (IGEWEAFSLPELQNFLRILDKEEDEQLQSLKRRYTAYRQKLEEALGEV) form the SARAH domain.

The protein resides in the cytoplasm. It is found in the cytoskeleton. The sequence is that of Ras association domain-containing protein 3 (Rassf3) from Mus musculus (Mouse).